A 147-amino-acid chain; its full sequence is Large ribosomal subunit protein uL15 (147 aa).

A disordered region spans residues 1 to 57; sequence MDLSNLSPAPGSTKARKRLGRGPGSGNGTTAGRGNKGHNSRSGGGVRPGFEGGQMPL. Gly residues-rich tracts occupy residues 21-31 and 42-52; these read RGPGSGNGTTA and SGGGVRPGFEG.

The protein belongs to the universal ribosomal protein uL15 family. Part of the 50S ribosomal subunit.

In terms of biological role, binds to the 23S rRNA. The sequence is that of Large ribosomal subunit protein uL15 from Desulfosudis oleivorans (strain DSM 6200 / JCM 39069 / Hxd3) (Desulfococcus oleovorans).